The following is a 422-amino-acid chain: Dihydroorotase (422 aa).

H59 and H61 together coordinate Zn(2+). Substrate is bound by residues 61 to 63 (HFR) and N93. The Zn(2+) site is built by D150, H177, and H230. N276 provides a ligand contact to substrate. D303 contacts Zn(2+). D303 is a catalytic residue. H307 contributes to the substrate binding site.

Belongs to the metallo-dependent hydrolases superfamily. DHOase family. Class I DHOase subfamily. The cofactor is Zn(2+).

The catalysed reaction is (S)-dihydroorotate + H2O = N-carbamoyl-L-aspartate + H(+). It functions in the pathway pyrimidine metabolism; UMP biosynthesis via de novo pathway; (S)-dihydroorotate from bicarbonate: step 3/3. Catalyzes the reversible cyclization of carbamoyl aspartate to dihydroorotate. The chain is Dihydroorotase from Streptococcus pneumoniae serotype 4 (strain ATCC BAA-334 / TIGR4).